The following is a 431-amino-acid chain: D-inositol 3-phosphate glycosyltransferase (431 aa).

Histidine 14 serves as a coordination point for 1D-myo-inositol 3-phosphate. UDP-N-acetyl-alpha-D-glucosamine-binding positions include 20-21 and glycine 28; that span reads QP. 1D-myo-inositol 3-phosphate contacts are provided by residues 25–30, lysine 83, tyrosine 116, threonine 140, and arginine 160; that span reads DAGGMN. Residues arginine 240 and lysine 245 each contribute to the UDP-N-acetyl-alpha-D-glucosamine site. Positions 315, 316, and 318 each coordinate Mg(2+). Positions 328 and 336 each coordinate UDP-N-acetyl-alpha-D-glucosamine. Threonine 342 is a Mg(2+) binding site.

Belongs to the glycosyltransferase group 1 family. MshA subfamily. As to quaternary structure, homodimer.

The enzyme catalyses 1D-myo-inositol 3-phosphate + UDP-N-acetyl-alpha-D-glucosamine = 1D-myo-inositol 2-acetamido-2-deoxy-alpha-D-glucopyranoside 3-phosphate + UDP + H(+). Functionally, catalyzes the transfer of a N-acetyl-glucosamine moiety to 1D-myo-inositol 3-phosphate to produce 1D-myo-inositol 2-acetamido-2-deoxy-glucopyranoside 3-phosphate in the mycothiol biosynthesis pathway. This Thermomonospora curvata (strain ATCC 19995 / DSM 43183 / JCM 3096 / KCTC 9072 / NBRC 15933 / NCIMB 10081 / Henssen B9) protein is D-inositol 3-phosphate glycosyltransferase.